The primary structure comprises 1052 residues: Calmin (1052 aa).

The segment at 1 to 288 (MAAQEWDWFQ…IVTYVAQFLE (288 aa)) is actin-binding. A Calponin-homology (CH) 1 domain is found at 32–139 (NVQKRTFTRW…LIWNIILFFQ (108 aa)). Over residues 148-168 (SRSSPSSSLSPGSGGTDSDSS) the composition is skewed to low complexity. Positions 148-178 (SRSSPSSSLSPGSGGTDSDSSYPPTPTTERS) are disordered. One can recognise a Calponin-homology (CH) 2 domain in the interval 187 to 291 (RKAIKTLLSW…YVAQFLERFP (105 aa)). 4 disordered regions span residues 391 to 420 (STGKTGSIAEPTPESSILSTRKDGRRSNSL), 455 to 545 (KATK…TLLA), 585 to 727 (STSQ…SPPL), and 758 to 929 (GEDL…DSSI). Basic and acidic residues-rich tracts occupy residues 455–465 (KATKELSKQDG) and 472–495 (VSKEKKKSEQEARLVLEAASDKVP). The segment covering 509–529 (AQPSQDSSFCNGTVESPSSQG) has biased composition (polar residues). Ser-537 bears the Phosphoserine mark. Composition is skewed to basic and acidic residues over residues 594-614 (PSSHEKTRGEEEGSENHAEKP), 622-651 (PRAETEAAESRLEPKKLEPPPKDPEQEDQG), and 659-669 (PADKKPKVYEK). Ser-679 is modified (phosphoserine). Thr-710 bears the Phosphothreonine mark. Residues 711-720 (LRSHSEEGLD) show a composition bias toward basic and acidic residues. The residue at position 724 (Ser-724) is a Phosphoserine. Basic and acidic residues predominate over residues 759–773 (EDLKSEDTDLEHPED). The span at 780–791 (REEEADEDEEEA) shows a compositional bias: acidic residues. Residues 792–801 (QSSQSSCSFS) show a composition bias toward low complexity. Residues 836–849 (SHEDHQPKETKENG) are compositionally biased toward basic and acidic residues. Position 856 is a phosphoserine (Ser-856). Residues 880–889 (SKKKEKRKHM) show a composition bias toward basic residues. A Phosphoserine modification is found at Ser-925. The helical; Anchor for type IV membrane protein transmembrane segment at 1027 to 1047 (VIYFILFLWLLVYCLLLFPQL) threads the bilayer.

Expressed in testis. Expressed during testis maturation process and in maturing spermatids. In brain, it is expressed in neurons of the hippocampus, cerebral cortex, and thalamus, Purkinje cells, and also in the choroid plexus and ependymal cells. Expressed predominantly in dendrites and cell bodies of the neurons, but not in axons. The level of expression increases during the period of maturation of the mouse brain after birth.

The protein localises to the membrane. The protein resides in the cytoplasm. The protein is Calmin (Clmn) of Mus musculus (Mouse).